The sequence spans 296 residues: Pantothenate synthetase (296 aa).

Residue 30–37 (MGNLHEGH) coordinates ATP. The active-site Proton donor is His37. Gln61 is a binding site for (R)-pantoate. A beta-alanine-binding site is contributed by Gln61. 149 to 152 (GEKD) contacts ATP. Gln155 lines the (R)-pantoate pocket. ATP is bound by residues Val178 and 186–189 (MSSR).

Belongs to the pantothenate synthetase family. Homodimer.

The protein localises to the cytoplasm. The enzyme catalyses (R)-pantoate + beta-alanine + ATP = (R)-pantothenate + AMP + diphosphate + H(+). It participates in cofactor biosynthesis; (R)-pantothenate biosynthesis; (R)-pantothenate from (R)-pantoate and beta-alanine: step 1/1. In terms of biological role, catalyzes the condensation of pantoate with beta-alanine in an ATP-dependent reaction via a pantoyl-adenylate intermediate. This Vibrio atlanticus (strain LGP32) (Vibrio splendidus (strain Mel32)) protein is Pantothenate synthetase.